A 157-amino-acid polypeptide reads, in one-letter code: Protein snakeskin (157 aa).

The Cytoplasmic segment spans residues 2-6 (VSVQT). The helical transmembrane segment at 7–27 (IATIVVKTFKIVLNIIILVLY) threads the bilayer. At 28–53 (RTGYNGEFLGVGGTWNLNEEKNPDAE) the chain is on the extracellular side. A helical membrane pass occupies residues 54–74 (IVASGVIVGYLIYTLVQIVTF). The Cytoplasmic portion of the chain corresponds to 75–87 (LFGTTEHKRALSE). A helical transmembrane segment spans residues 88–108 (IVMNFVGVFLWIAVGAVALHY). Residues 109-130 (WGGYQGEHQFQFVFAEKQVGLA) are Extracellular-facing. The chain crosses the membrane as a helical span at residues 131–151 (VGALCVINGAIYLLDTALSVI). Residues 152–157 (HFTKEM) are Cytoplasmic-facing.

Expressed in midgut epithelium (at protein level).

The protein resides in the apicolateral cell membrane. It localises to the cell junction. The protein localises to the septate junction. Required for assembly of smooth septate junctions (sSJs). May be important for barrier function of the midgut epithelium. The sequence is that of Protein snakeskin from Bombyx mori (Silk moth).